The primary structure comprises 176 residues: Neuropeptide-like protein 1 (176 aa).

The first 19 residues, 1 to 19, serve as a signal peptide directing secretion; the sequence is MKATFVLACLLVIAAVSHA. Residues 59–79 are disordered; it reads GKRSAEQNEQANKEDKATSDK. The span at 61 to 79 shows a compositional bias: basic and acidic residues; it reads RSAEQNEQANKEDKATSDK.

In AWC olfactory sensory neurons, required for the detection of preferred food sources. The sequence is that of Neuropeptide-like protein 1 (nlp-1) from Caenorhabditis elegans.